The primary structure comprises 1663 residues: MATDGASCEPDFSRAPEDAAGATAEAAKQDFDVDALSKSELRMLLSVMEGELEARDLVIEALRARRKEVFIQERYGRFNLNDPFLALQRDYEAGAGDKEKKPVCANPLSILEAVMAHCRKMQERMSTQLAAAESRQKKLEMEKLQLQALELEHKKLAARLEEERGKNKHVVLMLVKECKQLSGRVIEEAQKLEDVMAKLDEEKKKTSALEEELSTEKRRSTDMEAQMEKQLSEFDTEREQLRAKLHREEAHTADLKEEIDKMKKMIEQLKRGSDSKPSLSLPRKTKDRRLVSISVGTEGPMTRSVACQTDPVIESTDHVKKLPLTVPVKPSTGSPLVSANAKGNACTSAALVRPGIDRQASHGDLIGSSLPTVPPPSATRVEENGPSTDSAPDLTNSTPPVPSSTAPPAMQTPGAAPQSHSQAPLHSLHSPSANASLHPGLNPRIQAARFRFQGNANDPDQNGNTTQSPPSRDVSPTSRDNLVAKQLARNTVTQALSRFTGPPAGAPPRHGVPPSGDVGTYPPVGRTNVKTPGVARVDRGNPPPIPPKKPGLSQAPSPPHPQLKVVMDSSRAPSAGAKVDNKTVASPPSSLPPGNRVINEENLPKPTTPQLPPKPSIDLTVAPAGCAVSALATSQVGAWPAETPGLNQPACSERSLVIPTTIAFCSSINPVSASSCRAGASDSLLVTASGWSPSLTFLLMSGGPAPLAGRPTLLQQAAAQGNVTLLSMLLNEEGLDINYSCEDGHSALYSAAKNGHTDCVRLLLNAEAQVDAADKNGFTPLCAAAAQGHFKCVELLTAYDADINHTADGGQTPLYLACKNGNKECIKLLLEAGSDRSVKTSDGWTPLHAAVDTGNVDSVKLLMYHSAPARGHFLHEEEPESGVCGLDGGEGSPEGTAKPVVPADLINQADREGWTAAHIAASKGFKNCLEILCRHAGLEPDRREKCNRTVHDVATDDCKHLLENLHAFKIPLRISVGEVQPDIYCSDDFECENTICILNIRKQTSWDDFSKAVSQALTNHFQAISSDGWWSLEDVTCNNTADSSIGLGASSVRSVTLGNVPWSVGQSFAQSPWDFLRKNKAEQVSVLLSGPQEGCLSSVTYASLIPLQVLQNYLRLVEQYHNVIFHGPEGSLQNYIAHQLALCMKHRQIAAGFSCEIVRAQVDASFSKEQLADLFISSACLIPVKQSPVNKKIIIILENLEKSSMSELLGDFLAPLENRSPESPCTFHKGNGTSGCYYFHEHCFLMGTVAKACLQGSDLLVQQHFRWVQLRWDGEPMQSLLPRFLRRRAVNKFRGQVPSPCDPGCKAVDWAAAVWRQLNSCLTRLGTPEALLGPKYFLSCPVIPGHAQVTVKWMCKLWNAVIAPRVQEAILSRASVERHAGFAQTTAKKTPSQGQQAVVKAALSILLNKAVLHGCPLPRAELDQHTADFKGGSFPLSIVSSYNCCSKKKGENGTWRKVSTSPRKKSGHFSSPTWNKPDLNEEGIRNTTTSQLNCNRNASLSKQKSLENDLSSTLTLDQKLYLGSDDEADLIKELQSMCSSKSESDISKIADSRDDLRRFDSSRNNPTFSATVNNLRMPVSEKEVSPLSSHQTTECNDSKSKTESGVSRVKSFLPVPQSKATLCSQNTKRSSSSSNTRQIEINNNSKEEIWNLHKNEQVEKPNK.

Disordered regions lie at residues 1-26 (MATD…TAEA), 203-225 (KKKT…DMEA), 359-440 (QASH…LHPG), 454-478 (GNAN…SPTS), and 497-615 (SRFT…PPKP). Residues 119-276 (RKMQERMSTQ…EQLKRGSDSK (158 aa)) are a coiled coil. Polar residues-rich tracts occupy residues 385–396 (GPSTDSAPDLTN) and 418–435 (QSHS…SANA). An Asymmetric dimethylarginine modification is found at Arg-498. Positions 606–615 (PTTPQLPPKP) are enriched in pro residues. ANK repeat units lie at residues 709–739 (GRPT…DINY), 743–772 (DGHS…QVDA), 776–805 (NGFT…DINH), 809–838 (GGQT…DRSV), 842–871 (DGWT…PARG), and 912–942 (EGWT…EPDR). A disordered region spans residues 1449–1490 (KGENGTWRKVSTSPRKKSGHFSSPTWNKPDLNEEGIRNTTTS). A Phosphoserine modification is found at Ser-1524. The tract at residues 1579-1663 (VSEKEVSPLS…KNEQVEKPNK (85 aa)) is disordered. The span at 1586–1595 (PLSSHQTTEC) shows a compositional bias: polar residues. Over residues 1624–1638 (SQNTKRSSSSSNTRQ) the composition is skewed to low complexity. Basic and acidic residues predominate over residues 1645–1663 (SKEEIWNLHKNEQVEKPNK).

Interacts with CTTN/cortactin SH3 domain. Interacts with STRN, STRN4/zinedin and MOB4/phocein; this interactions mediate the association with the STRIPAK core complex and may regulate dendritic spine distribution of the STRIPAK complex in hippocampal neurons. Activation of glutamate receptors weakens the interaction with STRN and STRN4.

It localises to the cytoplasm. The protein localises to the cell cortex. Its subcellular location is the cell projection. The protein resides in the dendritic spine. Functionally, regulates the dendritic spine distribution of CTTN/cortactin in hippocampal neurons, and thus controls dendritic spinogenesis and dendritic spine maintenance. Associates with the striatin-interacting phosphatase and kinase (STRIPAK) core complex to regulate dendritic spine distribution of the STRIPAK complex in hippocampal neurons. The protein is Cortactin-binding protein 2 (CTTNBP2) of Rhinolophus ferrumequinum (Greater horseshoe bat).